The primary structure comprises 270 residues: Putative tRNA (cytidine(32)/guanosine(34)-2'-O)-methyltransferase (270 aa).

Residues Gly-53, Trp-55, Asp-78, Asp-94, and Asp-119 each coordinate S-adenosyl-L-methionine. The Proton acceptor role is filled by Lys-159.

The protein belongs to the class I-like SAM-binding methyltransferase superfamily. RNA methyltransferase RlmE family. TRM7 subfamily.

The protein resides in the cytoplasm. The enzyme catalyses cytidine(32)/guanosine(34) in tRNA + 2 S-adenosyl-L-methionine = 2'-O-methylcytidine(32)/2'-O-methylguanosine(34) in tRNA + 2 S-adenosyl-L-homocysteine + 2 H(+). Functionally, methylates the 2'-O-ribose of nucleotides at positions 32 and 34 of the tRNA anticodon loop of substrate tRNAs. The protein is Putative tRNA (cytidine(32)/guanosine(34)-2'-O)-methyltransferase (fsjA) of Dictyostelium discoideum (Social amoeba).